The chain runs to 334 residues: MNTEATHDQNEAQTTGVRLRNAREQLGLSQQAVAERLCLKVSTVRDIEEDKAPSDLASTFLRGYIRSYARLVHVPEEELLPGLEKQAPLRAAKVAPMQSFSLGKRRKKRDGWLMSFTWLVLFVVVGLTGAWWWQNHKAHQEEITTMADQSTAGLNADKDSGQSVPLDTGAVTSQDTTPAQTAPAPATPVDSTAATQTPAPTAAATQNTVVAPSQANVDTAATSAAPAATETPSALPTSQAGVAAPAADPNALVMNFTADCWLEVTDATGKRLFSGMQRKDGNLNLTGQAPYKLKIGAPAAVQIQYQGKPVDLSRFIRTNQVARLTLNAEPTPAQ.

Residues 1 to 111 (MNTEATHDQN…LGKRRKKRDG (111 aa)) lie on the Cytoplasmic side of the membrane. Residues 19–71 (LRNAREQLGLSQQAVAERLCLKVSTVRDIEEDKAPSDLASTFLRGYIRSYARL) form the HTH cro/C1-type domain. The H-T-H motif DNA-binding region spans 30 to 49 (QQAVAERLCLKVSTVRDIEE). Residues 112-132 (WLMSFTWLVLFVVVGLTGAWW) traverse the membrane as a helical; Signal-anchor for type II membrane protein segment. The Periplasmic segment spans residues 133–334 (WQNHKAHQEE…TLNAEPTPAQ (202 aa)). The segment at 152 to 210 (AGLNADKDSGQSVPLDTGAVTSQDTTPAQTAPAPATPVDSTAATQTPAPTAAATQNTVV) is disordered. The segment covering 161–175 (GQSVPLDTGAVTSQD) has biased composition (polar residues). The span at 176-210 (TTPAQTAPAPATPVDSTAATQTPAPTAAATQNTVV) shows a compositional bias: low complexity.

Belongs to the RodZ family.

It localises to the cell inner membrane. Functionally, cytoskeletal protein that is involved in cell-shape control through regulation of the length of the long axis. In Salmonella gallinarum (strain 287/91 / NCTC 13346), this protein is Cytoskeleton protein RodZ.